The chain runs to 142 residues: Large-conductance mechanosensitive channel (142 aa).

Transmembrane regions (helical) follow at residues 19–39 (VGII…ADLV), 41–61 (PFIA…ALDG), and 78–98 (FAFG…FVVF).

The protein belongs to the MscL family. Homopentamer.

It localises to the cell inner membrane. In terms of biological role, channel that opens in response to stretch forces in the membrane lipid bilayer. May participate in the regulation of osmotic pressure changes within the cell. The sequence is that of Large-conductance mechanosensitive channel from Roseobacter denitrificans (strain ATCC 33942 / OCh 114) (Erythrobacter sp. (strain OCh 114)).